Reading from the N-terminus, the 1123-residue chain is Translation initiation factor IF-2 (1123 aa).

Disordered regions lie at residues 52-452 and 480-512; these read LLKA…KVHI and LARPSKPKSQQKAAPKPVAAMRKRRKETTRQRQ. Low complexity-rich tracts occupy residues 54–73, 94–113, and 121–133; these read KAGSAPRAAASPSKPAPGKA, KPAASSPPAAPAAPTKAKSP, and AAPSRPAAPKASA. Positions 170–187 are enriched in pro residues; that stretch reads PPSPPARPVPQQPSPPSA. Residues 193 to 206 show a composition bias toward low complexity; it reads APIRRAAPNDAPRP. Composition is skewed to pro residues over residues 207-217 and 258-268; these read ANAPPSRPQPK and SPRPAVSPRPS. Low complexity predominate over residues 285-304; that stretch reads RPGAPTRPGTGAGRPSRPGG. The segment covering 320 to 339 has biased composition (gly residues); the sequence is GNRGEGGRPPGGARPAGGGN. Residues 388 to 403 are compositionally biased toward pro residues; that stretch reads ATPPVSRPTATPPSPA. Gly residues predominate over residues 412–422; sequence FRPGAGPGGQR. The segment covering 425-439 has biased composition (basic and acidic residues); sequence GRPDWDDSAKLDALR. A compositionally biased stretch (low complexity) spans 486–499; the sequence is PKSQQKAAPKPVAA. Residues 500–512 are compositionally biased toward basic residues; the sequence is MRKRRKETTRQRQ. Positions 615 to 787 constitute a tr-type G domain; sequence RRPPVVTVMG…LLLVTEVEDL (173 aa). The segment at 624-631 is G1; the sequence is GHVDHGKT. GTP is bound at residue 624–631; it reads GHVDHGKT. The G2 stretch occupies residues 649 to 653; that stretch reads GITQH. Residues 674–677 form a G3 region; the sequence is DTPG. GTP is bound by residues 674 to 678 and 728 to 731; these read DTPGH and NKID. The interval 728-731 is G4; sequence NKID. The segment at 764 to 766 is G5; the sequence is SAI.

The protein belongs to the TRAFAC class translation factor GTPase superfamily. Classic translation factor GTPase family. IF-2 subfamily.

It localises to the cytoplasm. In terms of biological role, one of the essential components for the initiation of protein synthesis. Protects formylmethionyl-tRNA from spontaneous hydrolysis and promotes its binding to the 30S ribosomal subunits. Also involved in the hydrolysis of GTP during the formation of the 70S ribosomal complex. The sequence is that of Translation initiation factor IF-2 from Synechococcus sp. (strain WH7803).